A 318-amino-acid chain; its full sequence is Retinol dehydrogenase 11 (318 aa).

The chain crosses the membrane as a helical; Signal-anchor for type II membrane protein span at residues 1 to 21 (MVELMFPLLLLLLPFLLYMAA). At 22 to 318 (PQIRKMLSSG…SCDLLGLPID (297 aa)) the chain is on the cytoplasmic side. Residue 48 to 54 (GANTGIG) coordinates NADP(+). Residue Lys-112 is modified to N6-acetyllysine. Residue Ser-177 coordinates substrate. Tyr-202 serves as the catalytic Proton acceptor.

It belongs to the short-chain dehydrogenases/reductases (SDR) family. As to quaternary structure, interacts with SELENOF. Not glycosylated. Predominantly expressed in the epithelial cells of prostate, in both basal and luminal secretory cell populations. Expressed at low levels in spleen, thymus, testis, ovary, small intestine, colon, peripherical blood leukocytes, kidney, adrenal gland and fetal liver. Not detected in prostatic fibromuscular stromal cells, endothelial cells, or infiltrating lymphocytes.

The protein resides in the endoplasmic reticulum membrane. The catalysed reaction is all-trans-retinol + NADP(+) = all-trans-retinal + NADPH + H(+). It catalyses the reaction 11-cis-retinol + NADP(+) = 11-cis-retinal + NADPH + H(+). It carries out the reaction 9-cis-retinol + NADP(+) = 9-cis-retinal + NADPH + H(+). The enzyme catalyses 13-cis-retinol + NADP(+) = 13-cis-retinal + NADPH + H(+). It participates in cofactor metabolism; retinol metabolism. With respect to regulation, SELENOF decreases the retinol dehydrogenase activity. Functionally, retinol dehydrogenase with a clear preference for NADP. Displays high activity towards 9-cis, 11-cis and all-trans-retinol, and to a lesser extent on 13-cis-retinol. Exhibits a low reductive activity towards unsaturated medium-chain aldehydes such as cis -6-nonenal and no activity toward nonanal or 4-hydroxy-nonenal. Has no dehydrogenase activity towards steroid. This is Retinol dehydrogenase 11 (RDH11) from Homo sapiens (Human).